Reading from the N-terminus, the 196-residue chain is Protein kinase OspG (196 aa).

It belongs to the protein kinase superfamily. Post-translationally, autophosphorylated.

It localises to the secreted. The protein resides in the host cell. Its function is as follows. Effector proteins function to alter host cell physiology and promote bacterial survival in host tissues. This protein is a kinase that is involved in down-regulation of the host innate response induced by invasive bacteria. The protein is Protein kinase OspG (ospG) of Shigella flexneri serotype X (strain 2002017).